The following is a 431-amino-acid chain: uncharacterized protein (431 aa).

2 disordered regions span residues 17 to 66 (VDPE…GQQA) and 81 to 415 (GSVT…ALPR). The segment covering 91-106 (DKADREPAARPRDPRS) has biased composition (basic and acidic residues). Basic residues predominate over residues 173–195 (TYRRRRPTAATPSRKKKARRGPK). A compositionally biased stretch (low complexity) spans 235–244 (RTPGPVHSAA). The span at 299–312 (RMGGSSGGRGGTPG) shows a compositional bias: gly residues. The span at 317–342 (RAAPGARPTAPDGAPGRWDGPADGPA) shows a compositional bias: low complexity. Residues 343–360 (PGLGRGGWGVGREAGGSG) show a composition bias toward gly residues.

This is an uncharacterized protein from Homo sapiens (Human).